Reading from the N-terminus, the 299-residue chain is Oxygen-dependent coproporphyrinogen-III oxidase (299 aa).

S92 is a substrate binding site. 2 residues coordinate a divalent metal cation: H96 and H106. H106 acts as the Proton donor in catalysis. Position 108–110 (N108–R110) interacts with substrate. A divalent metal cation contacts are provided by H145 and H175. Residues Y239–E274 form an important for dimerization region. G257–R259 lines the substrate pocket.

This sequence belongs to the aerobic coproporphyrinogen-III oxidase family. Homodimer. The cofactor is a divalent metal cation.

It is found in the cytoplasm. The enzyme catalyses coproporphyrinogen III + O2 + 2 H(+) = protoporphyrinogen IX + 2 CO2 + 2 H2O. Its pathway is porphyrin-containing compound metabolism; protoporphyrin-IX biosynthesis; protoporphyrinogen-IX from coproporphyrinogen-III (O2 route): step 1/1. Functionally, involved in the heme biosynthesis. Catalyzes the aerobic oxidative decarboxylation of propionate groups of rings A and B of coproporphyrinogen-III to yield the vinyl groups in protoporphyrinogen-IX. The protein is Oxygen-dependent coproporphyrinogen-III oxidase of Xanthomonas campestris pv. campestris (strain B100).